Reading from the N-terminus, the 468-residue chain is H(+)/Cl(-) exchange transporter ClcA (468 aa).

The Cytoplasmic segment spans residues 1 to 30; that stretch reads MSTRETFKISLLAKMPKDVINQFLSKDKTP. Residues 31–67 form a helical membrane-spanning segment; that stretch reads FSVLFLSLLVGILAGLVGTYFEQAVHLVSETRTDWLK. At 68-74 the chain is on the periplasmic side; that stretch reads SEIGSFL. Residues 75–98 form a helical membrane-spanning segment; it reads PLWLAAFLISAFLAFIGYFLVHRF. The short motif at 104–108 is the Selectivity filter part_1 element; that stretch reads GSGIP. Position 105 (S105) interacts with chloride. The segment at residues 107 to 114 is an intramembrane region (helical); it reads IPEIEGAM. The Cytoplasmic segment spans residues 115-121; that stretch reads DGMRPVR. The next 2 membrane-spanning stretches (helical) occupy residues 122-139 and 146-164; these read WWRV…ALGS and EGPT…SDIF. The Selectivity filter part_2 motif lies at 144 to 148; sequence GREGP. Residues 165-174 lie on the Cytoplasmic side of the membrane; that stretch reads RVKNEDTRHS. Intramembrane regions (helical) lie at residues 175–187 and 191–199; these read LLAA…LAAA and PLAGIMFVI. Topologically, residues 200-212 are cytoplasmic; it reads EEMRPQFRYTLIS. Residues 213 to 230 traverse the membrane as a helical segment; that stretch reads VRAVIISAVAANIVFRVI. Residues 231 to 250 are Periplasmic-facing; it reads NGQDAVITMPQYDAPELSTL. The chain crosses the membrane as a helical span at residues 251–279; sequence GLFLLLGALFGVFGVLFNYLITLAQDLFV. Residues 280–285 lie on the Cytoplasmic side of the membrane; that stretch reads KFHRND. A helical membrane pass occupies residues 286–307; it reads RKRYLLTGSMIGGCFGLLLLYV. At 308–327 the chain is on the periplasmic side; sequence PELTGGGISLIPTITNGGYG. Helical transmembrane passes span 328 to 347 and 353 to 374; these read AGIL…LCFG and GIFA…LIAK. Residues 353 to 357 carry the Selectivity filter part_3 motif; the sequence is GIFAP. Residues I354 and F355 each contribute to the chloride site. The Periplasmic segment spans residues 375–384; sequence MWFPELNIEP. An intramembrane region (helical) is located at residues 385–399; that stretch reads GMFAIAGMGALFAAT. Residues 400–402 constitute an intramembrane region (note=Loop between two helices); that stretch reads VRA. The helical intramembrane region spans 403 to 414; sequence PITGILLVIEMT. The note=Loop between two helices intramembrane region spans 415-419; that stretch reads NNYHL. The helical transmembrane segment at 420–436 threads the bilayer; it reads ILPLIITSLGAVIFAQL. At 437 to 468 the chain is on the cytoplasmic side; the sequence is LGGQPIYSQLLHRTLKNQKLQQQDLPPQSPNS. Y443 provides a ligand contact to chloride.

It belongs to the chloride channel (TC 2.A.49) family. ClcA subfamily. As to quaternary structure, homodimer.

The protein localises to the cell inner membrane. It catalyses the reaction 2 chloride(in) + H(+)(out) = 2 chloride(out) + H(+)(in). In terms of biological role, proton-coupled chloride transporter. Functions as antiport system and exchanges two chloride ions for 1 proton. Probably acts as an electrical shunt for an outwardly-directed proton pump that is linked to amino acid decarboxylation, as part of the extreme acid resistance (XAR) response. This Vibrio cholerae serotype O1 (strain ATCC 39315 / El Tor Inaba N16961) protein is H(+)/Cl(-) exchange transporter ClcA.